The primary structure comprises 185 residues: Prenylated Rab acceptor protein 1 (185 aa).

Topologically, residues 1–78 are cytoplasmic; it reads MAAQKDQQKD…RNVEYYQSNY (78 aa). The segment at 30–54 is required for interaction with prenylated RAB3A and VAMP2; sequence AGREWLERRRATIRPWGTFVDQQRF. Helical transmembrane passes span 79–94 and 95–112; these read VFVF…VTSP and MLLV…ILYL. The Cytoplasmic segment spans residues 113-131; the sequence is RTLQSKLVLFGREVSPAHQ. The next 2 helical transmembrane spans lie at 132-148 and 149-165; these read YALA…LAGA and GSAV…LIGS. The tract at residues 165 to 185 is required for interaction with GDI1; the sequence is SHAAFHQMEPADGEELQMEPV. Topologically, residues 166-185 are cytoplasmic; it reads HAAFHQMEPADGEELQMEPV. The tract at residues 175–185 is required for interaction with prenylated RAB3A and VAMP2; it reads ADGEELQMEPV. The segment at 175–185 is homodimerization; sequence ADGEELQMEPV.

The protein belongs to the PRA1 family. As to quaternary structure, homodimer. Interacts with VAMP2 (synaptobrevin-2), GDI1, NRDG1 and PCLO. Interacts with prenylated Rab proteins (including RAB5 and RAB6), and with the members of the Ras superfamily HRAS, RHOA, TC21, and RAP1A.

The protein localises to the cell membrane. Its subcellular location is the cytoplasm. It is found in the golgi apparatus. The protein resides in the cytoplasmic vesicle. It localises to the secretory vesicle. The protein localises to the synaptic vesicle. General Rab protein regulator required for vesicle formation from the Golgi complex. May control vesicle docking and fusion by mediating the action of Rab GTPases to the SNARE complexes. In addition it inhibits the removal of Rab GTPases from the membrane by GDI1. This chain is Prenylated Rab acceptor protein 1 (Rabac1), found in Mus musculus (Mouse).